The following is a 354-amino-acid chain: Ferrochelatase (354 aa).

Fe cation-binding residues include histidine 214 and glutamate 295.

This sequence belongs to the ferrochelatase family.

The protein localises to the cytoplasm. The catalysed reaction is heme b + 2 H(+) = protoporphyrin IX + Fe(2+). It functions in the pathway porphyrin-containing compound metabolism; protoheme biosynthesis; protoheme from protoporphyrin-IX: step 1/1. Functionally, catalyzes the ferrous insertion into protoporphyrin IX. The sequence is that of Ferrochelatase from Burkholderia lata (strain ATCC 17760 / DSM 23089 / LMG 22485 / NCIMB 9086 / R18194 / 383).